We begin with the raw amino-acid sequence, 59 residues long: UPF0181 protein CKO_01169 (59 aa).

This sequence belongs to the UPF0181 family.

The protein is UPF0181 protein CKO_01169 of Citrobacter koseri (strain ATCC BAA-895 / CDC 4225-83 / SGSC4696).